Consider the following 443-residue polypeptide: Mitochondrial enolase superfamily member 1 (443 aa).

Residues 24-26 and tyrosine 34 each bind substrate; that span reads GSD. At serine 148 the chain carries Phosphoserine. Lysine 220 is a substrate binding site. Lysine 222 serves as the catalytic Proton donor/acceptor. Aspartate 250 provides a ligand contact to Mg(2+). Substrate-binding positions include asparagine 252, glutamate 276, glutamate 305, 355 to 357, and glutamate 386; that span reads HAG. 2 residues coordinate Mg(2+): glutamate 276 and glutamate 305. The active site involves histidine 355.

This sequence belongs to the mandelate racemase/muconate lactonizing enzyme family. ENOSF1 subfamily. Requires Mg(2+) as cofactor. Post-translationally, could be sumoylated.

It is found in the mitochondrion. It carries out the reaction L-fuconate = 2-dehydro-3-deoxy-L-fuconate + H2O. Its function is as follows. Plays a role in the catabolism of L-fucose, a sugar that is part of the carbohydrates that are attached to cellular glycoproteins. Catalyzes the dehydration of L-fuconate to 2-keto-3-deoxy-L-fuconate by the abstraction of the 2-proton to generate an enediolate intermediate that is stabilized by the magnesium ion. May down-regulate thymidylate synthase activity, possibly already at the RNA level, by promoting the degradation of TYMS mRNA via an antisense RNA-based mechanism. This chain is Mitochondrial enolase superfamily member 1 (ENOSF1), found in Bos taurus (Bovine).